Consider the following 430-residue polypeptide: RNA pseudouridine synthase 2, chloroplastic (430 aa).

A chloroplast-targeting transit peptide spans 1-43; it reads MLSISQLPSFSLTTAKSLRYPSSPSSSLSIFFSFFPKVSNFVR. One can recognise an S4 RNA-binding domain in the interval 82-155; the sequence is IRLDSWISSR…IPLDIVYEDK (74 aa). The disordered stretch occupies residues 195–222; it reads SNSEEDDDSDEETFSDDEEMTTSPSSYA. Residues 196 to 214 show a composition bias toward acidic residues; the sequence is NSEEDDDSDEETFSDDEEM. Asp234 is a catalytic residue.

The protein belongs to the pseudouridine synthase RluA family.

The protein resides in the plastid. Its subcellular location is the chloroplast. The enzyme catalyses a uridine in RNA = a pseudouridine in RNA. This Arabidopsis thaliana (Mouse-ear cress) protein is RNA pseudouridine synthase 2, chloroplastic.